The sequence spans 164 residues: MANPLRKTMVYLGLADEELDYQQGQQPAQQQQSPVQAVPTPAPAPQQQAKRAPVTPLHKPSTTTRNAAPAEMNEILTVHPKAYKDAQVIAENFREGVPVIINLSQMTDDDARRLIDFASGLSIGLYGKIERVTAKVFLLSPSHVAVSGEQSATEAEVEASFFGR.

The tract at residues 21–71 (YQQGQQPAQQQQSPVQAVPTPAPAPQQQAKRAPVTPLHKPSTTTRNAAPAE) is disordered. Over residues 22 to 54 (QQGQQPAQQQQSPVQAVPTPAPAPQQQAKRAPV) the composition is skewed to low complexity.

This sequence belongs to the SepF family. Homodimer. Interacts with FtsZ.

The protein localises to the cytoplasm. In terms of biological role, cell division protein that is part of the divisome complex and is recruited early to the Z-ring. Probably stimulates Z-ring formation, perhaps through the cross-linking of FtsZ protofilaments. Its function overlaps with FtsA. In Clavibacter michiganensis subsp. michiganensis (strain NCPPB 382), this protein is Cell division protein SepF.